The following is a 680-amino-acid chain: Translation factor GUF1 homolog, chloroplastic (680 aa).

Residues 1–51 (MATATASRLAVPAPRTSPQAPGRRRPAAPLPSAPPRPRALSAAPRGRVVCP) constitute a chloroplast transit peptide. The segment at 1–68 (MATATASRLA…ASTTDAGQDR (68 aa)) is disordered. Over residues 28-37 (APLPSAPPRP) the composition is skewed to pro residues. Positions 38–60 (RALSAAPRGRVVCPAAPASSPAS) are enriched in low complexity. The tr-type G domain maps to 75–256 (SNIRNFSIIA…AIVTKIPPPQ (182 aa)). GTP is bound by residues 84-91 (AHIDHGKS), 149-153 (DTPGH), and 203-206 (NKID).

The protein belongs to the TRAFAC class translation factor GTPase superfamily. Classic translation factor GTPase family. LepA subfamily.

The protein localises to the plastid. The protein resides in the chloroplast. The enzyme catalyses GTP + H2O = GDP + phosphate + H(+). In terms of biological role, promotes chloroplast protein synthesis. May act as a fidelity factor of the translation reaction, by catalyzing a one-codon backward translocation of tRNAs on improperly translocated ribosomes. In Oryza sativa subsp. japonica (Rice), this protein is Translation factor GUF1 homolog, chloroplastic.